Here is a 502-residue protein sequence, read N- to C-terminus: MKEPTTEIEIETSAVATILPPPLPPTASPHQALVERLKDYGQEDVFSLWDELSPEERDLLLRDIENLDLPRIDRIIRCSLHSQGLPVAAIEPVPENCVSTVEERTKEDREKWWKMGLKAIYEGKLGVVLLSGGQGTRLGSSDPKGCYNIGLPSGKSLFQIQAERILCVQRLASQAMSEASPTRPVTIQWYIMTSPFTHEPTQKFFKSHKYFGLEPDQVTFFQQGTLPCISKDGKFIMETPFSLSKAPDGNGGVYTALKSSRLLEDMASRGIKYVDCYGVDNVLVRVADPTFLGYFIDKSAASAAKVVRKAYPQEKVGVFVRRGKGGPLTVVEYTELDQSMASATNQQTGRLQYCWSNVCLHMFTLDFLNQVANGLEKDSVYHLAEKKIPSINGDIVGLKLEQFIFDCFPYAPSTALFEVLREEEFAPVKNANGSNYDTPESARLLVLRLHTRWVIAAGGFLTHSVPLYATGVEVSPLCSYAGENLEAICRGRTFHAPCEISL.

Positions 130-133 (LSGG) match the Substrate binding motif. Residue Asn-250 participates in substrate binding. A Substrate binding motif is present at residues 332–333 (EY). Lys-429 lines the substrate pocket.

The protein belongs to the UDPGP type 1 family. Monomer. Requires Mg(2+) as cofactor. The cofactor is Mn(2+). Expressed in root tips, stipules, lateral root primordia, immature anthers and at the branching points of the flowering shoots.

The protein resides in the cytoplasm. It carries out the reaction N-acetyl-alpha-D-glucosamine 1-phosphate + UTP + H(+) = UDP-N-acetyl-alpha-D-glucosamine + diphosphate. The enzyme catalyses N-acetyl-alpha-D-galactosamine 1-phosphate + UTP + H(+) = UDP-N-acetyl-alpha-D-galactosamine + diphosphate. It catalyses the reaction alpha-D-glucose 1-phosphate + UTP + H(+) = UDP-alpha-D-glucose + diphosphate. The protein operates within nucleotide-sugar biosynthesis; UDP-N-acetyl-alpha-D-glucosamine biosynthesis; UDP-N-acetyl-alpha-D-glucosamine from N-acetyl-alpha-D-glucosamine 1-phosphate: step 1/1. Uridylyltransferase involved in the biosynthesis of UDP-glucosamine, an essential precursor for glycoprotein and glycolipid synthesis. Can use UDP-glucosamine, the 4-epimer UDP-galactosamine and UDP-glucose as substrates. Acts redundantly with GLCNAC1PUT1. Required for gametogenesis and embryo development. The sequence is that of UDP-N-acetylglucosamine diphosphorylase 2 (GLCNAC1PUT2) from Arabidopsis thaliana (Mouse-ear cress).